A 154-amino-acid polypeptide reads, in one-letter code: Small ribosomal subunit protein bS6 (154 aa).

Positions 94–154 (VKQEGPLPTP…SSQGKESQKS (61 aa)) are disordered. Residues 103–112 (PRSSNKGYNQ) show a composition bias toward polar residues. The span at 113 to 139 (SEKKDIESIDSTNKSEFKEEANDKKTA) shows a compositional bias: basic and acidic residues. The span at 140–154 (TSESTSSQGKESQKS) shows a compositional bias: polar residues.

The protein belongs to the bacterial ribosomal protein bS6 family.

Functionally, binds together with bS18 to 16S ribosomal RNA. The chain is Small ribosomal subunit protein bS6 from Prochlorococcus marinus subsp. pastoris (strain CCMP1986 / NIES-2087 / MED4).